We begin with the raw amino-acid sequence, 344 residues long: Aurora kinase B (344 aa).

The residue at position 35 (T35) is a Phosphothreonine. Positions N46–P65 are disordered. A Phosphoserine modification is found at S62. Position 64 is a phosphothreonine (T64). The Protein kinase domain maps to F77–V327. ATP-binding positions include L83–V91 and K106. Catalysis depends on D200, which acts as the Proton acceptor. N6-acetyllysine is present on K215. At S227 the chain carries Phosphoserine. Residue T232 is modified to Phosphothreonine; by autocatalysis.

The protein belongs to the protein kinase superfamily. Ser/Thr protein kinase family. Aurora subfamily. As to quaternary structure, component of the chromosomal passenger complex (CPC) composed of at least BIRC5/survivin, CDCA8/borealin, INCENP, AURKB or AURKC; predominantly independent AURKB- and AURKC-containing complexes exist. Associates with RACGAP1 during M phase. Interacts with SPDYC; this interaction may be required for proper localization of active, Thr-232-phosphorylated AURKB form during prometaphase and metaphase. Interacts with p53/TP53. Interacts (via the middle kinase domain) with NOC2L (via the N- and C-terminus domains). Interacts with CDCA1. Interacts with EVI5. Interacts with JTB. Interacts with NDC80. Interacts with PSMA3. Interacts with RNF2/RING1B. Interacts with SEPTIN1. Interacts with SIRT2. Interacts with TACC1. Interacts with TTC28. In terms of processing, the phosphorylation of Thr-232 requires the binding to INCENP and occurs by means of an autophosphorylation mechanism. Thr-232 phosphorylation is indispensable for the AURKB kinase activity. Acetylated at Lys-215 by KAT5 at kinetochores, increasing AURKB activity and promoting accurate chromosome segregation in mitosis. Post-translationally, ubiquitinated by different BCR (BTB-CUL3-RBX1) E3 ubiquitin ligase complexes. Ubiquitinated by the BCR(KLHL9-KLHL13) E3 ubiquitin ligase complex, ubiquitination leads to removal from mitotic chromosomes and is required for cytokinesis. During anaphase, the BCR(KLHL21) E3 ubiquitin ligase complex recruits the CPC complex from chromosomes to the spindle midzone and mediates the ubiquitination of AURKB. Ubiquitination of AURKB by BCR(KLHL21) E3 ubiquitin ligase complex may not lead to its degradation by the proteasome. Deubiquitinated by USP35; inhibiting CDH1-mediated degradation of AURKB.

It localises to the nucleus. The protein localises to the chromosome. Its subcellular location is the centromere. The protein resides in the kinetochore. It is found in the cytoplasm. It localises to the cytoskeleton. The protein localises to the spindle. Its subcellular location is the midbody. The enzyme catalyses L-seryl-[protein] + ATP = O-phospho-L-seryl-[protein] + ADP + H(+). It catalyses the reaction L-threonyl-[protein] + ATP = O-phospho-L-threonyl-[protein] + ADP + H(+). With respect to regulation, activity is greatly increased when AURKB is within the CPC complex. In particular, AURKB-phosphorylated INCENP acts as an activator of AURKB. Positive feedback between HASPIN and AURKB contributes to CPC localization. In terms of biological role, serine/threonine-protein kinase component of the chromosomal passenger complex (CPC), a complex that acts as a key regulator of mitosis. The CPC complex has essential functions at the centromere in ensuring correct chromosome alignment and segregation and is required for chromatin-induced microtubule stabilization and spindle assembly. Involved in the bipolar attachment of spindle microtubules to kinetochores and is a key regulator for the onset of cytokinesis during mitosis. Required for central/midzone spindle assembly and cleavage furrow formation. Key component of the cytokinesis checkpoint, a process required to delay abscission to prevent both premature resolution of intercellular chromosome bridges and accumulation of DNA damage: phosphorylates CHMP4C, leading to retain abscission-competent VPS4 (VPS4A and/or VPS4B) at the midbody ring until abscission checkpoint signaling is terminated at late cytokinesis. AURKB phosphorylates the CPC complex subunits BIRC5/survivin, CDCA8/borealin and INCENP. Phosphorylation of INCENP leads to increased AURKB activity. Other known AURKB substrates involved in centromeric functions and mitosis are CENPA, DES/desmin, GPAF, KIF2C, NSUN2, RACGAP1, SEPTIN1, VIM/vimentin, HASPIN, and histone H3. A positive feedback loop involving HASPIN and AURKB contributes to localization of CPC to centromeres. Phosphorylation of VIM controls vimentin filament segregation in cytokinetic process, whereas histone H3 is phosphorylated at 'Ser-10' and 'Ser-28' during mitosis (H3S10ph and H3S28ph, respectively). AURKB is also required for kinetochore localization of BUB1 and SGO1. Phosphorylation of p53/TP53 negatively regulates its transcriptional activity. Key regulator of active promoters in resting B- and T-lymphocytes: acts by mediating phosphorylation of H3S28ph at active promoters in resting B-cells, inhibiting RNF2/RING1B-mediated ubiquitination of histone H2A and enhancing binding and activity of the USP16 deubiquitinase at transcribed genes. Acts as an inhibitor of CGAS during mitosis: catalyzes phosphorylation of the N-terminus of CGAS during the G2-M transition, blocking CGAS liquid phase separation and activation, and thereby preventing CGAS-induced autoimmunity. Phosphorylates KRT5 during anaphase and telophase. Phosphorylates ATXN10 which promotes phosphorylation of ATXN10 by PLK1 and may play a role in the regulation of cytokinesis and stimulating the proteasomal degradation of ATXN10. This chain is Aurora kinase B (AURKB), found in Bos taurus (Bovine).